The primary structure comprises 186 residues: MEPTRDCPLFGGAFSAILPMGAIDVSDLRPVPDNQEVFCHPVTDQSLIVELLELQAHVRGEAAARYHFEDVGGVQGARAVHVESVQPLSLENLALRGRCQEAWVLSGKQQIAKENQQVAKDVTLHQALLRLPQYQTDLLLTFNQPPPDNRSSLGPENLSPAPWSLGDFEQLVTSLTLHDPNIFGPQ.

The interaction with RAN stretch occupies residues Asp-27–Asp-70.

Belongs to the MOG1 family. In terms of assembly, monomer. Interacts with RAN, both RAN-GTP and RAN-GDP. Competes with RCC1 for a common binding site on RAN and thereby inhibits RCC1-mediated nucleotide exchange. Forms a complex with RAN-GTP and RANBP1. Interacts with the cytoplasmic loop 2 of SCN5A. Isoform 1 and isoform 2 are ubiquitously expressed. Detected in heart and brain.

Its subcellular location is the nucleus. The protein localises to the cytoplasm. It is found in the perinuclear region. It localises to the cell membrane. In terms of biological role, may regulate the intracellular trafficking of RAN. Promotes guanine nucleotide release from RAN and inhibits binding of new GTP by preventing the binding of the RAN guanine nucleotide exchange factor RCC1. Regulates the levels of GTP-bound RAN in the nucleus, and thereby plays a role in the regulation of RAN-dependent mitotic spindle dynamics. Enhances the expression of SCN5A at the cell membrane in cardiomyocytes. The chain is Ran guanine nucleotide release factor (RANGRF) from Homo sapiens (Human).